The primary structure comprises 322 residues: MTAWQKIQKIAPAAIGACLFVLSIGAINSELHHYGWQNVLASFQGIVKTRLAGAFALMLINYIILTGYDTLAMFYLGQSLPLTKTSFVGFVSYAISNSVGLALLSGSAIRYRLYQSWQVSAPIIAQAIAFCNLSFWVGLLTVGGITFVVDPLQLPAFLHLPFLSVHPIGFTFLAIIGIYLLITGNLIKPFKIGQWQTPKIPFAVSLAQIGLTAVDWILASGILYVLLPGHHHLSFPGFFGIYLLAQVAGIISNVPGGLGVFETVVLFLLTPKYSSVQVLGALLAYRVIYYWIPLGSASLSLGAFELLQHRRERRQKSGSESE.

Transmembrane regions (helical) follow at residues 7–27, 54–74, 87–107, 128–148, 162–182, 209–229, 249–269, and 287–307; these read IQKIAPAAIGACLFVLSIGAI, AFALMLINYIILTGYDTLAMF, FVGFVSYAISNSVGLALLSGS, IAFCNLSFWVGLLTVGGITFV, FLSVHPIGFTFLAIIGIYLLI, IGLTAVDWILASGILYVLLPG, GIISNVPGGLGVFETVVLFLL, and VIYYWIPLGSASLSLGAFELL.

The protein to E.coli YbhN.

It is found in the cell membrane. This is an uncharacterized protein from Synechocystis sp. (strain ATCC 27184 / PCC 6803 / Kazusa).